The chain runs to 1083 residues: DNA primase (1083 aa).

The CHC2-type zinc-finger motif lies at 1022-1061; sequence CLRYPHRGGRTAPRTFVSLRVDHHNRLCISLAQQCFATKC.

Belongs to the herpesviridae DNA primase family. As to quaternary structure, associates with the helicase and the primase-associated factor to form the helicase-primase factor.

The protein resides in the host nucleus. Its function is as follows. Essential component of the helicase/primase complex. Unwinds the DNA at the replication forks and generates single-stranded DNA for both leading and lagging strand synthesis. The primase initiates primer synthesis and thereby produces large amount of short RNA primers on the lagging strand that the polymerase elongates using dNTPs. This chain is DNA primase, found in Homo sapiens (Human).